The following is a 391-amino-acid chain: Cytochrome P450 165A3 (391 aa).

Positions 1 to 22 are disordered; sequence MFEEKNALRGTEIHRRERFDPG. Cys342 contributes to the heme binding site.

This sequence belongs to the cytochrome P450 family. The cofactor is heme.

The protein operates within antibiotic biosynthesis; vancomycin biosynthesis. Functionally, involved in the coupling of aromatic side chains of the heptapeptide of vancomycin. In Amycolatopsis orientalis (Nocardia orientalis), this protein is Cytochrome P450 165A3 (cyp165A3).